The following is a 249-amino-acid chain: 5'-nucleotidase SurE (249 aa).

A divalent metal cation contacts are provided by aspartate 8, aspartate 9, serine 39, and asparagine 91.

Belongs to the SurE nucleotidase family. The cofactor is a divalent metal cation.

It localises to the cytoplasm. The enzyme catalyses a ribonucleoside 5'-phosphate + H2O = a ribonucleoside + phosphate. In terms of biological role, nucleotidase that shows phosphatase activity on nucleoside 5'-monophosphates. The sequence is that of 5'-nucleotidase SurE from Pseudomonas putida (strain ATCC 47054 / DSM 6125 / CFBP 8728 / NCIMB 11950 / KT2440).